A 53-amino-acid polypeptide reads, in one-letter code: Large ribosomal subunit protein eL24 (53 aa).

Zn(2+)-binding residues include Cys-4, Cys-7, Cys-30, and Cys-34. A C4-type zinc finger spans residues 4–34 (CSFCHEEIEPGTGKMYVKRDGTIYFFCSSKC).

Belongs to the eukaryotic ribosomal protein eL24 family. In terms of assembly, part of the 50S ribosomal subunit. Forms a cluster with proteins L3 and L14. Zn(2+) serves as cofactor.

Functionally, binds to the 23S rRNA. The chain is Large ribosomal subunit protein eL24 from Methanothermobacter thermautotrophicus (strain ATCC 29096 / DSM 1053 / JCM 10044 / NBRC 100330 / Delta H) (Methanobacterium thermoautotrophicum).